Reading from the N-terminus, the 329-residue chain is NAD(P)H-dependent D-xylose reductase (329 aa).

The active-site Proton donor is the tyrosine 52. Position 114 (histidine 114) interacts with substrate. NAD(+) contacts are provided by residues 173–174 (SN), 222–231 (SSFGPVSFLE), and 278–288 (KSSKKERLLDN).

It belongs to the aldo/keto reductase family.

The catalysed reaction is xylitol + NAD(+) = D-xylose + NADH + H(+). It carries out the reaction xylitol + NADP(+) = D-xylose + NADPH + H(+). The protein operates within carbohydrate metabolism; D-xylose degradation. In terms of biological role, reduces D-xylose into xylitol. In Kluyveromyces lactis (strain ATCC 8585 / CBS 2359 / DSM 70799 / NBRC 1267 / NRRL Y-1140 / WM37) (Yeast), this protein is NAD(P)H-dependent D-xylose reductase (XYL1).